We begin with the raw amino-acid sequence, 1439 residues long: Fanconi anemia group D2 protein (1439 aa).

A Glycyl lysine isopeptide (Lys-Gly) (interchain with G-Cter in ubiquitin) cross-link involves residue K563.

The protein belongs to the Fanconi anemia protein FANCD2 family. In terms of assembly, homodimer; cannot be ubiquitinated and does not bind DNA. Part of a FANCI-FANCD2 heterodimeric complex that binds and scans dsDNA for DNA damage. Interacts directly with FANCE and FANCI. Interacts with USP1 and MEN1. The ubiquitinated form specifically interacts with BRCA1 and BLM. Both the nonubiquitinated and the monoubiquitinated forms interact with BRCA2; this interaction is mediated by phosphorylated FANCG and the complex also includes XCCR3. The ubiquitinated form specifically interacts with MTMR15/FAN1 (via UBZ-type zinc finger), leading to recruit MTMR15/FAN1 to sites of DNA damage. Interacts with DCLRE1B/Apollo. Interacts with POLN. Interacts with UHRF1 and UHRF2; these interactions promote FANCD2 activation. Monoubiquitinated on Lys-563 during S phase and upon genotoxic stress. Deubiquitinated by USP1 as cells enter G2/M, or once DNA repair is completed. Monoubiquitination prevents DNA release from the FANCI-FANCD2 complex. FANCD2 is only ubiquitinated in the FANCI-FANCD2 complex and the monoubiquitination of FANCD2 is promoted by phosphorylation of FANCI. In terms of processing, phosphorylated in response to various genotoxic stresses by ATM and/or ATR.

It localises to the nucleus. Functionally, required for maintenance of chromosomal stability. Promotes accurate and efficient pairing of homologs during meiosis. Involved in the repair of DNA double-strand breaks, both by homologous recombination and single-strand annealing. The FANCI-FANCD2 complex binds and scans double-stranded DNA (dsDNA) for DNA damage; this complex stalls at DNA junctions between double-stranded DNA and single-stranded DNA. May participate in S phase and G2 phase checkpoint activation upon DNA damage. Plays a role in preventing breakage and loss of missegregating chromatin at the end of cell division, particularly after replication stress. Required for the targeting, or stabilization, of BLM to non-centromeric abnormal structures induced by replicative stress. Promotes BRCA2/FANCD1 loading onto damaged chromatin. May also be involved in B-cell immunoglobulin isotype switching. This Gallus gallus (Chicken) protein is Fanconi anemia group D2 protein.